Here is a 549-residue protein sequence, read N- to C-terminus: Mitogen-activated protein kinase 15 (549 aa).

The tract at residues 1-20 (MCAAEVDRHVAQRYLIKRRL) is ubiquitin-conjugating. The 292-residue stretch at 14-305 (YLIKRRLGKG…AEQALQHPYV (292 aa)) folds into the Protein kinase domain. ATP contacts are provided by residues 20–28 (LGKGAYGIV) and Lys43. Asp138 (proton acceptor) is an active-site residue. A Phosphothreonine modification is found at Thr176. The TXY signature appears at 176-178 (TEY). Tyr178 is subject to Phosphotyrosine. Positions 266 to 286 (LDALLPPDTPPEALDLLKRLL) are necessary to interact with ESRRA, to regulate its subcellular localization and to inhibit its transcriptional activity. Positions 301–382 (QHPYVQRFHC…ARTQSLKSGV (82 aa)) are requires for interaction with GABARAP, MAP1LC3B AND GABARAPL1. A disordered region spans residues 370–507 (ASPARTQSLK…PEPRPGRRMF (138 aa)). 2 PXXXP motif repeats span residues 380-384 (SGVLP) and 387-391 (PAETP). PXXXP motif; regulates binding with chromatin and interaction with PCNA repeat units follow at residues 395 to 399 (RGPKP) and 403 to 407 (PGHDP). The segment covering 403 to 416 (PGHDPEHVEVRRQS) has biased composition (basic and acidic residues). Arg451 carries the omega-N-methylarginine modification. Residues 456–467 (SLTSQAEAQAAN) show a composition bias toward polar residues. Residues 483-492 (AVGARRVPSR) show a composition bias toward low complexity. Basic and acidic residues predominate over residues 493-502 (LPREAPEPRP).

Belongs to the protein kinase superfamily. CMGC Ser/Thr protein kinase family. MAP kinase subfamily. In terms of assembly, interacts with TGFB1I1. Interacts with CSK/c-Src, ABL1 and RET. Interacts with GABARAP, MAP1LC3B and GABARAPL1; controls, in a kinase-dependent fashion, both basal and starvation-induced autophagy. Interacts with ESRRA; promotes re-localization of ESRRA to the cytoplasm through a XPO1-dependent mechanism then inhibits ESRRA transcriptional activity. Interacts with PCNA; the interaction is chromatin binding- and kinase activity-dependent and prevents MDM2-mediated PCNA destruction by inhibiting the association of PCNA with MDM2. Interacts with DVL2. Interacts with CLIC3; MAPK15 does not phosphorylates CLIC3. Post-translationally, autophosphorylated on Thr-176 and Tyr-178; activates the enzyme. In terms of processing, ubiquitinated. Ubiquitination may allow its tight kinase activity regulation and rapid turnover. May be ubiquitinated by a SCF E3 ligase. In terms of tissue distribution, expressed at all stages of oocyte meiotic maturation.

Its subcellular location is the cytoplasm. The protein resides in the cytoskeleton. It localises to the cilium basal body. The protein localises to the cell junction. It is found in the tight junction. Its subcellular location is the microtubule organizing center. The protein resides in the centrosome. It localises to the centriole. The protein localises to the cytoplasmic vesicle. It is found in the autophagosome. Its subcellular location is the golgi apparatus. The protein resides in the nucleus. It localises to the spindle. The enzyme catalyses L-seryl-[protein] + ATP = O-phospho-L-seryl-[protein] + ADP + H(+). The catalysed reaction is L-threonyl-[protein] + ATP = O-phospho-L-threonyl-[protein] + ADP + H(+). Its activity is regulated as follows. Activated by threonine and tyrosine phosphorylation. Inhibited by dual specificity phosphatases, such as DUSP1. Phosphorylation and activation in response to DNA damaging agents, serum stimulation. Constitutively activated when phosphorylated on Tyr-178. Activity depends on the relative rates of MAPK15 autophosphorylation and dephosphorylation by PTPN1. In terms of biological role, atypical MAPK protein that regulates several process such as autophagy, ciliogenesis, protein trafficking/secretion and genome integrity, in a kinase activity-dependent manner. Controls both, basal and starvation-induced autophagy throught its interaction with GABARAP, MAP1LC3B and GABARAPL1 leading to autophagosome formation, SQSTM1 degradation and reduced MAP1LC3B inhibitory phosphorylation. Regulates primary cilium formation and the localization of ciliary proteins involved in cilium structure, transport, and signaling. Prevents the relocation of the sugar-adding enzymes from the Golgi to the endoplasmic reticulum, thereby restricting the production of sugar-coated proteins. Upon amino-acid starvation, mediates transitional endoplasmic reticulum site disassembly and inhibition of secretion. Binds to chromatin leading to MAPK15 activation and interaction with PCNA, that which protects genomic integrity by inhibiting MDM2-mediated degradation of PCNA. Regulates DA transporter (DAT) activity and protein expression via activation of RhoA. In response to H(2)O(2) treatment phosphorylates ELAVL1, thus preventing it from binding to the PDCD4 3'UTR and rendering the PDCD4 mRNA accessible to miR-21 and leading to its degradation and loss of protein expression. Also functions in a kinase activity-independent manner as a negative regulator of growth. Phosphorylates in vitro FOS and MBP. During oocyte maturation, plays a key role in the microtubule organization and meiotic cell cycle progression in oocytes, fertilized eggs, and early embryos. Interacts with ESRRA promoting its re-localization from the nucleus to the cytoplasm and then prevents its transcriptional activity. This is Mitogen-activated protein kinase 15 from Mus musculus (Mouse).